The following is a 239-amino-acid chain: Ribosomal RNA small subunit methyltransferase G (239 aa).

Residues G77, F82, 128-129 (AE), and R146 each bind S-adenosyl-L-methionine. Residues 216–239 (KRRQTSKKYPRKPGTPNKSPLVES) are disordered.

Belongs to the methyltransferase superfamily. RNA methyltransferase RsmG family.

It localises to the cytoplasm. In terms of biological role, specifically methylates the N7 position of guanine in position 535 of 16S rRNA. The chain is Ribosomal RNA small subunit methyltransferase G from Staphylococcus epidermidis (strain ATCC 35984 / DSM 28319 / BCRC 17069 / CCUG 31568 / BM 3577 / RP62A).